The following is a 940-amino-acid chain: Isoleucine--tRNA ligase (940 aa).

A 'HIGH' region motif is present at residues 58-68 (PYANGSIHIGH). Glu564 provides a ligand contact to L-isoleucyl-5'-AMP. A 'KMSKS' region motif is present at residues 605 to 609 (KMSKS). Lys608 serves as a coordination point for ATP. Cys903, Cys906, Cys923, and Cys926 together coordinate Zn(2+).

The protein belongs to the class-I aminoacyl-tRNA synthetase family. IleS type 1 subfamily. Monomer. Zn(2+) is required as a cofactor.

It localises to the cytoplasm. The enzyme catalyses tRNA(Ile) + L-isoleucine + ATP = L-isoleucyl-tRNA(Ile) + AMP + diphosphate. Functionally, catalyzes the attachment of isoleucine to tRNA(Ile). As IleRS can inadvertently accommodate and process structurally similar amino acids such as valine, to avoid such errors it has two additional distinct tRNA(Ile)-dependent editing activities. One activity is designated as 'pretransfer' editing and involves the hydrolysis of activated Val-AMP. The other activity is designated 'posttransfer' editing and involves deacylation of mischarged Val-tRNA(Ile). In Shewanella sp. (strain ANA-3), this protein is Isoleucine--tRNA ligase.